Reading from the N-terminus, the 286-residue chain is Energy-coupling factor transporter ATP-binding protein EcfA2 (286 aa).

Residues 3-245 (IKIENLTYTY…IDTLEKVGLA (243 aa)) enclose the ABC transporter domain. 40 to 47 (GHTGSGKS) lines the ATP pocket.

It belongs to the ABC transporter superfamily. Energy-coupling factor EcfA family. In terms of assembly, forms a stable energy-coupling factor (ECF) transporter complex composed of 2 membrane-embedded substrate-binding proteins (S component), 2 ATP-binding proteins (A component) and 2 transmembrane proteins (T component).

The protein localises to the cell membrane. Functionally, ATP-binding (A) component of a common energy-coupling factor (ECF) ABC-transporter complex. Unlike classic ABC transporters this ECF transporter provides the energy necessary to transport a number of different substrates. The protein is Energy-coupling factor transporter ATP-binding protein EcfA2 of Clostridium acetobutylicum (strain ATCC 824 / DSM 792 / JCM 1419 / IAM 19013 / LMG 5710 / NBRC 13948 / NRRL B-527 / VKM B-1787 / 2291 / W).